We begin with the raw amino-acid sequence, 405 residues long: SPbeta prophage-derived uncharacterized protein YomR (405 aa).

The stretch at 9 to 36 (QLKQNNIQINSLRGSNDRAEKHMLEHEQ) forms a coiled coil.

This is SPbeta prophage-derived uncharacterized protein YomR (yomR) from Bacillus subtilis (strain 168).